The following is a 429-amino-acid chain: UDP-N-acetylglucosamine 1-carboxyvinyltransferase (429 aa).

22–23 is a binding site for phosphoenolpyruvate; the sequence is KN. R102 contributes to the UDP-N-acetyl-alpha-D-glucosamine binding site. Residue C126 is the Proton donor of the active site. C126 is modified (2-(S-cysteinyl)pyruvic acid O-phosphothioketal). UDP-N-acetyl-alpha-D-glucosamine is bound by residues 131–135, D316, and I338; that span reads RPVDL.

The protein belongs to the EPSP synthase family. MurA subfamily.

The protein localises to the cytoplasm. The catalysed reaction is phosphoenolpyruvate + UDP-N-acetyl-alpha-D-glucosamine = UDP-N-acetyl-3-O-(1-carboxyvinyl)-alpha-D-glucosamine + phosphate. The protein operates within cell wall biogenesis; peptidoglycan biosynthesis. Its function is as follows. Cell wall formation. Adds enolpyruvyl to UDP-N-acetylglucosamine. The chain is UDP-N-acetylglucosamine 1-carboxyvinyltransferase from Rhodopseudomonas palustris (strain HaA2).